We begin with the raw amino-acid sequence, 321 residues long: MPLLPAALTSSMLYFQMVIMAGTVMLAYYFEYTDTFTVNVQGFFCHDSAYRKPYPGPEDSSAVPPVLLYSLAAGVPVLVIIVGETAVFCLQLATRDFENQEKTILTGDCCYINPLVRRTVRFLGIYTFGLFATDIFVNAGQVVTGNLAPHFLALCKPNYTALGCQQYTQFISGEEACTGNPDLIMRARKTFPSKEAALSVYAAMYLTMYITNTIKAKGTRLAKPVLCLGLMCLAFLTGLNRVAEYRNHWSDVIAGFLVGISIAVFLVVCVVNNFKGRQAENEHIHMDNLAQMPMISIPRVESPLEKVTSVQNHITAFAEVT.

Helical transmembrane passes span S10–F30, A62–V82, F122–V142, A196–T213, V225–Y245, and V252–N272.

It belongs to the PA-phosphatase related phosphoesterase family. In terms of tissue distribution, isoform 1 is expressed in brain, lung, kidney and colon. Isoform 2 is expressed in placenta, skeletal muscle and kidney.

The protein resides in the cell membrane. In terms of biological role, induces filopodia formation and promotes neurite growth in a CDC42-independent manner; impedes neurite growth inhibitory-mediated axonal retraction. The chain is Phospholipid phosphatase-related protein type 5 from Homo sapiens (Human).